Here is a 396-residue protein sequence, read N- to C-terminus: Elongation factor Tu (396 aa).

A tr-type G domain is found at Lys10–Val206. The G1 stretch occupies residues Gly19–Thr26. Residue Gly19–Thr26 participates in GTP binding. Thr26 provides a ligand contact to Mg(2+). The segment at Gly62 to Asn66 is G2. The tract at residues Asp83 to Gly86 is G3. GTP contacts are provided by residues Asp83–His87 and Asn138–Asp141. Residues Asn138–Asp141 are G4. The G5 stretch occupies residues Ser176–Leu178.

The protein belongs to the TRAFAC class translation factor GTPase superfamily. Classic translation factor GTPase family. EF-Tu/EF-1A subfamily. In terms of assembly, monomer.

The protein resides in the cytoplasm. The catalysed reaction is GTP + H2O = GDP + phosphate + H(+). Its function is as follows. GTP hydrolase that promotes the GTP-dependent binding of aminoacyl-tRNA to the A-site of ribosomes during protein biosynthesis. The polypeptide is Elongation factor Tu (Arthrobacter sp. (strain FB24)).